The following is a 543-amino-acid chain: Splicing factor U2af large subunit B (543 aa).

Over residues 1–10 (MADDNGGGGD) the composition is skewed to gly residues. Residues 1-171 (MADDNGGGGD…IPTPSQLPGS (171 aa)) form a disordered region. Composition is skewed to basic and acidic residues over residues 17–78 (VRPE…DRDR) and 88–114 (EHRDRPDDHDRHRSRDSERRRDRERDG). Basic residues predominate over residues 115–126 (HRRHRSRSRSRS). RRM domains are found at residues 207 to 290 (RRVY…RPTD), 327 to 405 (DRIF…RANQ), and 446 to 532 (QVVT…YPEN).

The protein belongs to the splicing factor SR family.

The protein localises to the nucleus. Functionally, necessary for the splicing of pre-mRNA. This is Splicing factor U2af large subunit B (U2AF65B) from Triticum aestivum (Wheat).